The primary structure comprises 908 residues: Metabotropic glutamate receptor 8 (908 aa).

Positions 1-33 are cleaved as a signal peptide; the sequence is MVCEGKRSTSCPCFFLLTAKFYWILTMMQRTHS. Over 34 to 583 the chain is Extracellular; sequence QEYAHSIRLD…IIKLEWHSPW (550 aa). Cysteines 64 and 106 form a disulfide. An N-linked (GlcNAc...) asparagine glycan is attached at asparagine 95. L-glutamate-binding positions include serine 156, 177-179, and tyrosine 227; that span reads AST. Disulfide bonds link cysteine 246/cysteine 534, cysteine 369/cysteine 384, cysteine 424/cysteine 431, cysteine 516/cysteine 535, cysteine 520/cysteine 538, cysteine 541/cysteine 553, and cysteine 556/cysteine 569. The N-linked (GlcNAc...) asparagine glycan is linked to asparagine 298. Aspartate 309 lines the L-glutamate pocket. Lysine 401 contacts L-glutamate. Asparagine 452 and asparagine 480 each carry an N-linked (GlcNAc...) asparagine glycan. An N-linked (GlcNAc...) asparagine glycan is attached at asparagine 565. A helical transmembrane segment spans residues 584–608; sequence AVVPVFIAILGIIATTFVIVTFVRY. Residues 609–620 lie on the Cytoplasmic side of the membrane; it reads NDTPIVRASGRE. Residues 621–641 traverse the membrane as a helical segment; the sequence is LSYVLLTGIFLCYSITFLMIA. Topologically, residues 642 to 647 are extracellular; sequence APDTII. A helical membrane pass occupies residues 648–668; it reads CSFRRIFLGLGMCFSYAALLT. Over 669–695 the chain is Cytoplasmic; that stretch reads KTNRIHRIFEQGKKSVTAPKFISPASQ. A helical membrane pass occupies residues 696 to 716; sequence LVITFSLISVQLLGVFVWFVV. At 717 to 746 the chain is on the extracellular side; sequence DPPHTIIDYGEQRTLDPENARGVLKCDISD. The chain crosses the membrane as a helical span at residues 747–768; the sequence is LSLICSLGYSILLMVTCTVYAI. The Cytoplasmic segment spans residues 769–781; it reads KTRGVPETFNEAK. Residues 782-803 traverse the membrane as a helical segment; sequence PIGFTMYTTCIIWLAFIPIFFG. At 804 to 818 the chain is on the extracellular side; that stretch reads TAQSAEKMYIQTTTL. A helical transmembrane segment spans residues 819-843; the sequence is TVSMSLSASVSLGMLYMPKVYIIIF. Residues 844–908 are Cytoplasmic-facing; it reads HPEQNVQKRK…TYISYSNHSI (65 aa). A Glycyl lysine isopeptide (Lys-Gly) (interchain with G-Cter in SUMO1) cross-link involves residue lysine 882.

It belongs to the G-protein coupled receptor 3 family. Interacts with PICK1. Strongly expressed in olfactory bulb, accessory olfactory bulb, and mammillary body. Weaker expression in the retina, and in scattered cells in the cortex and hindbrain.

The protein resides in the cell membrane. In terms of biological role, G-protein coupled receptor for glutamate. Ligand binding causes a conformation change that triggers signaling via guanine nucleotide-binding proteins (G proteins) and modulates the activity of down-stream effectors. Signaling inhibits adenylate cyclase activity. This Mus musculus (Mouse) protein is Metabotropic glutamate receptor 8 (Grm8).